A 239-amino-acid polypeptide reads, in one-letter code: Ankyrin repeat domain-containing protein 49 (239 aa).

Ser49 is subject to Phosphoserine. ANK repeat units lie at residues 73 to 103 (DPSR…HVNT), 107 to 136 (DEYT…DVHA), 140 to 169 (DGWT…DINA), and 173 to 206 (GLLT…GLKN).

As to expression, widely expressed in fetus, at a high level in fetal liver, brain and lung.

The protein localises to the nucleus. Its function is as follows. Induces HBG1 expression. May have a role in spermatogenesis where it promotes autophagy in response to serum starvation, via the NF-kappaB pathway. The sequence is that of Ankyrin repeat domain-containing protein 49 (ANKRD49) from Homo sapiens (Human).